Reading from the N-terminus, the 1379-residue chain is Partitioning defective protein 3 (1379 aa).

The span at 1-23 (MSASSTSSSSTSCPEGGEPSGSC) shows a compositional bias: low complexity. 2 disordered regions span residues 1–32 (MSAS…GEST) and 208–335 (YNVG…SDRK). 2 stretches are compositionally biased toward polar residues: residues 239–256 (SFDQ…PKPS) and 272–284 (ILRS…ASGS). 2 stretches are compositionally biased toward basic and acidic residues: residues 302-315 (EVEK…ERKS) and 322-335 (DKNP…SDRK). PDZ domains are found at residues 381 to 483 (LVTF…IINR) and 515 to 599 (VVEL…SRVS). Residues 606–626 (TSASSENKENEETLKVVEEEK) adopt a coiled-coil conformation. The PDZ 3 domain occupies 659–750 (VIPFINGSSS…EVGMISSNVR (92 aa)). Disordered stretches follow at residues 767 to 873 (DLSR…MGAA), 887 to 918 (HQRQ…RSPM), 949 to 1085 (QSME…GGNV), 1273 to 1301 (VEPV…SGSS), and 1350 to 1379 (AYET…FPQY). 2 stretches are compositionally biased toward low complexity: residues 776–786 (SSPSPSSRMSS) and 798–826 (ATRG…AVPA). Basic and acidic residues-rich tracts occupy residues 828 to 844 (LTER…RNDE) and 854 to 869 (FNRE…EKRG). A compositionally biased stretch (low complexity) spans 894–912 (PTSSTQKRSKSQPRSSSQR). Polar residues predominate over residues 967 to 977 (QIPTGSSSKVQ). Basic and acidic residues-rich tracts occupy residues 1030–1040 (KSRDASPEKTP) and 1048–1060 (SVER…DERN). The span at 1290-1301 (STSSGAVASGSS) shows a compositional bias: low complexity.

This sequence belongs to the PAR3 family. As to quaternary structure, required, together with pkc-3, for the localization of par-6; par-6 is involved in localizing/maintaining par-3 at the cell periphery. Interacts with par-6 and pkc-3 for localization at the periphery of anterior cortex of the embryo. As to expression, asymmetrically distributed at the periphery of the zygote and in dividing blastomeres of the germline lineage. Coexpressed with par-6; patchy expression observed at the periphery after completion of meiosis I and in meiosis II. On completion of metaphase II, expression is restricted to the anterior 85% of embryo length; this decreases to 55% in embryos between prophase and telophase of the first mitosis. During the first cleavage, expression is detected in the advancing furrow. Transiently coexpressed and colocalized asymmetrically with par-6 and pkc-3, in the developing somatic gonad, including the spermathecal precursor cells of L4 larvae.

It localises to the cytoplasm. In cooperation with pkc-3, required for establishing cell polarity and regulating spindle orientation in the early embryo. Localization is crucial for recruiting par-6 and pkc-3 to the peripheral apical cortex and restricting par-2 to basolateral surfaces. Necessary for apicobasal and anterior-posterior asymmetries associated with cell adhesion and gastrulation during the first few cycles of embryogenesis, and also for epithelial cell polarity in the distal spermatheca. Regulates the asymmetric localization of csnk-1, ppk-1 and gpr-1/2 during the first embryonic division. The chain is Partitioning defective protein 3 from Caenorhabditis elegans.